A 976-amino-acid polypeptide reads, in one-letter code: Leucine--tRNA ligase (976 aa).

Low complexity predominate over residues 1–23 (MTESPTTTPGSTSGAPSGVPSGV). Residues 1–34 (MTESPTTTPGSTSGAPSGVPSGVNDAESDAPRHR) are disordered. A 'HIGH' region motif is present at residues 86–97 (PYPSGEGLHVGH). The 'KMSKS' region signature appears at 745 to 749 (KIGKS). Lys748 is an ATP binding site.

This sequence belongs to the class-I aminoacyl-tRNA synthetase family.

It is found in the cytoplasm. The catalysed reaction is tRNA(Leu) + L-leucine + ATP = L-leucyl-tRNA(Leu) + AMP + diphosphate. The sequence is that of Leucine--tRNA ligase from Mycobacterium ulcerans (strain Agy99).